The primary structure comprises 301 residues: uncharacterized protein (301 aa).

A run of 9 helical transmembrane segments spans residues 1-21, 33-53, 72-92, 101-121, 124-144, 185-205, 220-240, 246-266, and 270-290; these read MSWI…LGIV, SVLF…YFYY, AMSL…KIPG, FGII…TILI, FAWL…KTFY, YFTP…VFAI, IIYT…FCLA, FSYI…KIFI, and IAIP…FGII.

It belongs to the TerC family.

It is found in the cell membrane. This is an uncharacterized protein from Rickettsia felis (strain ATCC VR-1525 / URRWXCal2) (Rickettsia azadi).